Here is a 228-residue protein sequence, read N- to C-terminus: Type II methyltransferase M.HhaII (228 aa).

It belongs to the N(4)/N(6)-methyltransferase family.

It carries out the reaction a 2'-deoxyadenosine in DNA + S-adenosyl-L-methionine = an N(6)-methyl-2'-deoxyadenosine in DNA + S-adenosyl-L-homocysteine + H(+). Functionally, a beta subtype methylase, recognizes the double-stranded sequence 5'-GANTC-3', methylates A-2 on both strands, and protects the DNA from cleavage by the HhaII endonuclease. The chain is Type II methyltransferase M.HhaII from Haemophilus parahaemolyticus.